A 192-amino-acid polypeptide reads, in one-letter code: Archaemetzincin (192 aa).

H137 lines the Zn(2+) pocket. E138 acts as the Proton acceptor in catalysis. Zn(2+)-binding residues include H141, H147, C148, C153, C172, and C175.

Belongs to the peptidase M54 family. As to quaternary structure, monomer. Zn(2+) serves as cofactor.

In terms of biological role, probable zinc metalloprotease whose natural substrate is unknown. The sequence is that of Archaemetzincin from Pyrococcus furiosus (strain ATCC 43587 / DSM 3638 / JCM 8422 / Vc1).